A 523-amino-acid chain; its full sequence is MQLPRELKYAAIAGGVALFGLIFGWVLFPTILKSQLKKEMALSKKTDVRKMWEKIPFALDFKVYIFYFTNAEEVQKGATPILKEIGPYHFDEWKEKVEVEDHEEDDTITYKKRDVFYFNPEMSAPGLTGEEIVVIPHIFMLGMALTVARDKPAMLNMIGKAMNGIFDDPPDIFLRVKVLDILFRGMIINCARTEFAPKATCTALKKEGVSGLVLEPNNQFRFSIFGTRNNTIDPHVITVKRGITNVMDVGQVVAVDGKTEQTIWRDTCNEFQGTDGTVFPPFVPETERIESFSTDLCRTFKPWYQKKTSYRGIKTNRYIANIGDFANDPELNCYCSKPDTCPPKGLMDLAPCMKAPMYVSLPHFLDSDPALLTKVKGLNPDVTQHGIEIDYEPITGTPMVAKQRIQFNIQLLKTDKLDLFKDLSGDIVPLFWIDEGLSLNKTFVNMLKHQLFIPKRVVGVLRWWMVSFGSLGAVIGIVFHFRDHIMRLAVSGDTKVSKVIPEVEEQKDISVIGQAQEPAKVNI.

Residues 1–11 lie on the Cytoplasmic side of the membrane; sequence MQLPRELKYAA. The chain crosses the membrane as a helical span at residues 12–32; it reads IAGGVALFGLIFGWVLFPTIL. At 33 to 458 the chain is on the extracellular side; sequence KSQLKKEMAL…HQLFIPKRVV (426 aa). Asn229 carries N-linked (GlcNAc...) asparagine glycosylation. Disulfide bonds link Cys268–Cys333, Cys297–Cys352, and Cys335–Cys341. Asn440 is a glycosylation site (N-linked (GlcNAc...) asparagine). Residues 459-479 traverse the membrane as a helical segment; the sequence is GVLRWWMVSFGSLGAVIGIVF. Topologically, residues 480–523 are cytoplasmic; that stretch reads HFRDHIMRLAVSGDTKVSKVIPEVEEQKDISVIGQAQEPAKVNI.

Belongs to the CD36 family.

The protein resides in the cell membrane. Its function is as follows. Plays an olfactory role that is not restricted to pheromone sensitivity. In Helicoverpa assulta (Oriental tobacco budworm), this protein is Sensory neuron membrane protein 1.